The sequence spans 249 residues: Phosphoribosylaminoimidazole-succinocarboxamide synthase (249 aa).

The protein belongs to the SAICAR synthetase family.

The enzyme catalyses 5-amino-1-(5-phospho-D-ribosyl)imidazole-4-carboxylate + L-aspartate + ATP = (2S)-2-[5-amino-1-(5-phospho-beta-D-ribosyl)imidazole-4-carboxamido]succinate + ADP + phosphate + 2 H(+). Its pathway is purine metabolism; IMP biosynthesis via de novo pathway; 5-amino-1-(5-phospho-D-ribosyl)imidazole-4-carboxamide from 5-amino-1-(5-phospho-D-ribosyl)imidazole-4-carboxylate: step 1/2. In Roseiflexus sp. (strain RS-1), this protein is Phosphoribosylaminoimidazole-succinocarboxamide synthase.